Reading from the N-terminus, the 185-residue chain is FK506-binding protein 2 (185 aa).

Positions 1-20 (MQGLLLSLSLLASAAVGVLA) are cleaved as a signal peptide. In terms of domain architecture, PPIase FKBP-type spans 41-129 (GDKINVHYKG…VFETELVGIE (89 aa)). The Prevents secretion from ER motif lies at 182–185 (HNEL).

It belongs to the FKBP-type PPIase family. FKBP2 subfamily.

Its subcellular location is the endoplasmic reticulum. The enzyme catalyses [protein]-peptidylproline (omega=180) = [protein]-peptidylproline (omega=0). Inhibited by both FK506 and rapamycin. Functionally, PPIases accelerate the folding of proteins. It catalyzes the cis-trans isomerization of proline imidic peptide bonds in oligopeptides. The chain is FK506-binding protein 2 (FPR2) from Podospora anserina (Pleurage anserina).